We begin with the raw amino-acid sequence, 265 residues long: Undecaprenyl-diphosphatase (265 aa).

7 helical membrane-spanning segments follow: residues 38-58, 75-95, 108-128, 135-155, 181-201, 215-235, and 244-264; these read RSDFFNIVIQAGAILAICLAL, RDYVLKVGVAFLVTAVVGLIV, PVAWALLIGGVWMLVAEHFAG, VVTWKVAIAVGLAQVVAGVFP, FVFMVGIPTMFAASGYALLEM, VAVAFVAATITGFVVVKWLLG, and VFAVYRMLLGAALLLWLPAAA.

The protein belongs to the UppP family.

It localises to the cell inner membrane. The catalysed reaction is di-trans,octa-cis-undecaprenyl diphosphate + H2O = di-trans,octa-cis-undecaprenyl phosphate + phosphate + H(+). Catalyzes the dephosphorylation of undecaprenyl diphosphate (UPP). Confers resistance to bacitracin. This chain is Undecaprenyl-diphosphatase, found in Xanthomonas euvesicatoria pv. vesicatoria (strain 85-10) (Xanthomonas campestris pv. vesicatoria).